A 448-amino-acid chain; its full sequence is Adenylosuccinate synthetase (448 aa).

GTP is bound by residues 22-28 and 50-52; these read GDEGKGK and GHT. Asp23 functions as the Proton acceptor in the catalytic mechanism. Positions 23 and 50 each coordinate Mg(2+). IMP contacts are provided by residues 23–26, 48–51, Thr139, Arg153, Gln234, Thr249, and Arg321; these read DEGK and NAGH. Residue His51 is the Proton donor of the active site. 317 to 323 contacts substrate; that stretch reads SVTGRPR. GTP contacts are provided by residues Arg323, 349–351, and 431–433; these read KLD and STG.

Belongs to the adenylosuccinate synthetase family. In terms of assembly, homodimer. The cofactor is Mg(2+).

The protein localises to the cytoplasm. The catalysed reaction is IMP + L-aspartate + GTP = N(6)-(1,2-dicarboxyethyl)-AMP + GDP + phosphate + 2 H(+). It participates in purine metabolism; AMP biosynthesis via de novo pathway; AMP from IMP: step 1/2. Functionally, plays an important role in the de novo pathway of purine nucleotide biosynthesis. Catalyzes the first committed step in the biosynthesis of AMP from IMP. The sequence is that of Adenylosuccinate synthetase from Burkholderia pseudomallei (strain 1106a).